A 225-amino-acid chain; its full sequence is Imidazoleglycerol-phosphate dehydratase (225 aa).

It belongs to the imidazoleglycerol-phosphate dehydratase family.

The catalysed reaction is D-erythro-1-(imidazol-4-yl)glycerol 3-phosphate = 3-(imidazol-4-yl)-2-oxopropyl phosphate + H2O. It participates in amino-acid biosynthesis; L-histidine biosynthesis; L-histidine from 5-phospho-alpha-D-ribose 1-diphosphate: step 6/9. In Pyricularia oryzae (strain 70-15 / ATCC MYA-4617 / FGSC 8958) (Rice blast fungus), this protein is Imidazoleglycerol-phosphate dehydratase (PTH3).